We begin with the raw amino-acid sequence, 550 residues long: MLKNINPTQTQAWKALTAHFESAQDMDLKELFAQDAARFDKYSARFGSDILVDYSKNLINEETLKHLFALANETELKSAIEAMFSGEAINQTEGRAVLHTALRNRTNTPVMVDGEDVMPAVNAVLEKMKSFTDRVIGGEWKGYTGKAITDIVNIGIGGSDLGPYMVTEALAPYKNHLNLHFVSNVDGTHIVETLKKVNPETTLFLIASKTFTTQETMTNAHTARDWFLESAGDQAHVAKHFAALSTNATAVSEFGIDTANMFEFWDWVGGRYSLWSAIGLSIALAVGYDNFVELLDGAHEMDKHFVSTDLESNIPVILALIGIWYNNFHGAESEAILPYDQYMHRFAAYFQQGNMESNGKYVDREGNAVTYQTGPIIWGEPGTNGQHAFYQLIHQGTKLIPCDFIAPAISHNPAGDHHQKLMSNFFAQTEALAFGKSEETVKEELVKAGKNAEEVAAIAPFKVFEGNRPTNSILVKQITPRTLGNLIAMYEHKIFVQGVIWNIFSFDQWGVELGKQLANQILPELADASQINSHDSSTNGLINAFKAFKA.

The active-site Proton donor is Glu-356. Active-site residues include His-387 and Lys-515.

Belongs to the GPI family.

The protein resides in the cytoplasm. The catalysed reaction is alpha-D-glucose 6-phosphate = beta-D-fructose 6-phosphate. It participates in carbohydrate biosynthesis; gluconeogenesis. The protein operates within carbohydrate degradation; glycolysis; D-glyceraldehyde 3-phosphate and glycerone phosphate from D-glucose: step 2/4. Its function is as follows. Catalyzes the reversible isomerization of glucose-6-phosphate to fructose-6-phosphate. The sequence is that of Glucose-6-phosphate isomerase from Vibrio parahaemolyticus serotype O3:K6 (strain RIMD 2210633).